Reading from the N-terminus, the 278-residue chain is Sulfur carrier protein FdhD (278 aa).

The active-site Cysteine persulfide intermediate is Cys-121. 260-265 (FCKPGR) is a Mo-bis(molybdopterin guanine dinucleotide) binding site.

This sequence belongs to the FdhD family.

It is found in the cytoplasm. In terms of biological role, required for formate dehydrogenase (FDH) activity. Acts as a sulfur carrier protein that transfers sulfur from IscS to the molybdenum cofactor prior to its insertion into FDH. In Salmonella newport (strain SL254), this protein is Sulfur carrier protein FdhD.